Here is a 552-residue protein sequence, read N- to C-terminus: Protein psiB (552 aa).

A signal peptide spans 1 to 18; the sequence is MKLLSVLITFLLATVIYS. Asn60 is a glycosylation site (N-linked (GlcNAc...) asparagine). The PA14 domain maps to 114 to 255; sequence TYDTTRNIYV…EDYCGVCQGD (142 aa). N-linked (GlcNAc...) asparagine glycans are attached at residues Asn281, Asn313, Asn340, Asn365, Asn446, Asn472, and Asn521.

This sequence belongs to the prespore-cell-inducing factor family.

It localises to the secreted. The chain is Protein psiB (psiB) from Dictyostelium discoideum (Social amoeba).